Consider the following 459-residue polypeptide: Ribulose bisphosphate carboxylase large chain (459 aa).

The residue at position 4 (Lys4) is an N6,N6,N6-trimethyllysine. Substrate contacts are provided by Asn113 and Thr163. Lys165 acts as the Proton acceptor in catalysis. Lys167 is a substrate binding site. 3 residues coordinate Mg(2+): Lys191, Asp193, and Glu194. Lys191 carries the post-translational modification N6-carboxylysine. The active-site Proton acceptor is His284. Substrate is bound by residues Arg285, His317, and Ser369.

Belongs to the RuBisCO large chain family. Type I subfamily. In terms of assembly, heterohexadecamer of 8 large chains and 8 small chains; disulfide-linked. The disulfide link is formed within the large subunit homodimers. Requires Mg(2+) as cofactor. Post-translationally, the disulfide bond which can form in the large chain dimeric partners within the hexadecamer appears to be associated with oxidative stress and protein turnover.

It localises to the plastid. It is found in the chloroplast. The catalysed reaction is 2 (2R)-3-phosphoglycerate + 2 H(+) = D-ribulose 1,5-bisphosphate + CO2 + H2O. The enzyme catalyses D-ribulose 1,5-bisphosphate + O2 = 2-phosphoglycolate + (2R)-3-phosphoglycerate + 2 H(+). In terms of biological role, ruBisCO catalyzes two reactions: the carboxylation of D-ribulose 1,5-bisphosphate, the primary event in carbon dioxide fixation, as well as the oxidative fragmentation of the pentose substrate in the photorespiration process. Both reactions occur simultaneously and in competition at the same active site. This Nypa fruticans (Nypa palm) protein is Ribulose bisphosphate carboxylase large chain.